Reading from the N-terminus, the 254-residue chain is Glutathione S-transferase F14 (254 aa).

One can recognise a GST N-terminal domain in the interval 4 to 85; it reads SKMKLHCGFI…YLAEQYKDVG (82 aa). Glutathione contacts are provided by residues 42–43, 56–57, and 69–70; these read AK, EV, and EP. The 140-residue stretch at 92–231 folds into the GST C-terminal domain; that stretch reads DPKKRAIMSM…DLMKQRRLPI (140 aa).

It belongs to the GST superfamily. Phi family.

Its subcellular location is the cytoplasm. The protein resides in the cytosol. It carries out the reaction RX + glutathione = an S-substituted glutathione + a halide anion + H(+). Its function is as follows. May be involved in the conjugation of reduced glutathione to a wide number of exogenous and endogenous hydrophobic electrophiles and have a detoxification role against certain herbicides. This is Glutathione S-transferase F14 from Arabidopsis thaliana (Mouse-ear cress).